The sequence spans 106 residues: uncharacterized protein (106 aa).

2 helical membrane passes run 10 to 30 (VYIQMVAFSPYRIVLPFVAFV) and 65 to 85 (LDFASAFVVPAASFVESLLAY).

The protein resides in the membrane. This is an uncharacterized protein from Saccharomyces cerevisiae (strain ATCC 204508 / S288c) (Baker's yeast).